Here is an 87-residue protein sequence, read N- to C-terminus: Small ribosomal subunit protein uS17 (87 aa).

Belongs to the universal ribosomal protein uS17 family. Part of the 30S ribosomal subunit.

Functionally, one of the primary rRNA binding proteins, it binds specifically to the 5'-end of 16S ribosomal RNA. This is Small ribosomal subunit protein uS17 from Cytophaga hutchinsonii (strain ATCC 33406 / DSM 1761 / CIP 103989 / NBRC 15051 / NCIMB 9469 / D465).